A 543-amino-acid chain; its full sequence is Pectate disaccharide-lyase (543 aa).

The protein belongs to the polysaccharide lyase 2 family. Cu cation serves as cofactor. Mn(2+) is required as a cofactor. The cofactor is Ni(2+).

The protein localises to the cytoplasm. It carries out the reaction [(1-&gt;4)-alpha-D-galacturonosyl](n) = 4-(4-deoxy-alpha-D-galact-4-enuronosyl)-D-galacturonate + [(1-&gt;4)-alpha-D-galacturonosyl](n-2). The protein operates within glycan metabolism; pectin degradation. Catalyzes the formation of unsaturated digalacturonates from polygalacturonate or short oligogalacturonates. The protein is Pectate disaccharide-lyase (pelW) of Dickeya dadantii (strain 3937) (Erwinia chrysanthemi (strain 3937)).